We begin with the raw amino-acid sequence, 233 residues long: Superoxide dismutase [Mn] 3.4, mitochondrial (233 aa).

Residues 1 to 29 (MALRTLASKNALSFALGGAARPSAASARG) constitute a mitochondrion transit peptide. Residues His57, His105, Asp194, and His198 each coordinate Mn(2+).

This sequence belongs to the iron/manganese superoxide dismutase family. As to quaternary structure, homotetramer. The cofactor is Mn(2+).

The protein localises to the mitochondrion matrix. The enzyme catalyses 2 superoxide + 2 H(+) = H2O2 + O2. Destroys superoxide anion radicals which are normally produced within the cells and which are toxic to biological systems. This Zea mays (Maize) protein is Superoxide dismutase [Mn] 3.4, mitochondrial (SODA.3).